Reading from the N-terminus, the 557-residue chain is Multidrug transporter FLR1 (557 aa).

N-linked (GlcNAc...) asparagine glycans are attached at residues Asn33, Asn48, and Asn106. A compositionally biased stretch (low complexity) spans 44–57; that stretch reads SESSNMSFNSGSEE. The segment at 44–67 is disordered; that stretch reads SESSNMSFNSGSEENSQEKSVEDL. A run of 8 helical transmembrane segments spans residues 113-133, 149-169, 181-201, 204-224, 238-258, 271-291, 355-375, and 387-407; these read ALII…SSIY, VVGT…PIVF, LPVY…CALA, FAGL…ALST, LALV…LAPL, WIFW…TFFF, LYIA…PIVF, and GLAY…LLVF. Asn418 carries N-linked (GlcNAc...) asparagine glycosylation. 4 helical membrane-spanning segments follow: residues 426–446, 450–470, 484–506, and 521–541; these read TLIL…MFGW, VHWI…FNIF, YVAS…FPLF, and VAWG…IPFV.

This sequence belongs to the major facilitator superfamily.

Its subcellular location is the cell membrane. Functionally, multidrug transporter that confers resistance to 5-flucytosine (5-FC) and clotrimazole. Also confers resistance to benomyl, but not 4-nitroquinoline-N-oxide, cycloheximide, or fluconazole. Plays direct roles in extrusion of 5-flucytosine and clotrimazole. This chain is Multidrug transporter FLR1, found in Candida glabrata (strain ATCC 2001 / BCRC 20586 / JCM 3761 / NBRC 0622 / NRRL Y-65 / CBS 138) (Yeast).